A 225-amino-acid chain; its full sequence is MGIKDWPEGEGPRDKLLQKGAGQLSDAELLAVLLRNGLAGLNAVDLARSLISEFGGLRNLLCAPRNQVCRLPGVGPVKYAQLQAAAELARRVAQENLQRGQVLTNPDLTRDYLMRQLADRSYEVFAVLLLDSQHRVIQFVELFRGTIDSASVYPREVVSLVLEKKAAAVIVCHNHPSGNAEPSQADRRITERLKNALATIDVSLLDHMVVGDREIVSFAERGWIN.

Residues 102–224 (VLTNPDLTRD…IVSFAERGWI (123 aa)) enclose the MPN domain. Zn(2+) is bound by residues His-173, His-175, and Asp-186. The JAMM motif motif lies at 173–186 (HNHPSGNAEPSQAD).

This sequence belongs to the UPF0758 family.

This is UPF0758 protein Shew185_0376 from Shewanella baltica (strain OS185).